Consider the following 421-residue polypeptide: Subtilisin-like protease 2 (421 aa).

The N-terminal stretch at 1-16 (MQLLNFGLLLLPFVAG) is a signal peptide. Positions 17 to 122 (DLAPQPEPLL…VHPDQHVYLA (106 aa)) are excised as a propeptide. One can recognise an Inhibitor I9 domain in the interval 36-122 (QYIVTLKEGL…VHPDQHVYLA (87 aa)). Residues 131 to 421 (RWGLGYMSSK…ERKFTLPKYF (291 aa)) enclose the Peptidase S8 domain. Active-site charge relay system residues include Asp169 and His201. Residues Asn248, Asn261, and Asn348 are each glycosylated (N-linked (GlcNAc...) asparagine). Ser357 (charge relay system) is an active-site residue. N-linked (GlcNAc...) asparagine glycosylation is present at Asn388.

The protein belongs to the peptidase S8 family.

It localises to the secreted. In terms of biological role, secreted subtilisin-like serine protease with keratinolytic activity that contributes to pathogenicity. The protein is Subtilisin-like protease 2 (SUB2) of Trichophyton equinum (Horse ringworm fungus).